The chain runs to 329 residues: Bile salt hydrolase/transferase (329 aa).

The active-site Nucleophile; acyl-thioester intermediate is the cysteine 2. Residues cysteine 2 and arginine 18 each contribute to the deoxycholate site. Asparagine 82 is a binding site for taurine.

The protein belongs to the peptidase C59 family. As to quaternary structure, homotetramer. The tetramer consists of a dimer of dimers.

It catalyses the reaction glycocholate + H2O = cholate + glycine. The enzyme catalyses cholate + taurine = taurocholate + H2O. It carries out the reaction taurodeoxycholate + H2O = deoxycholate + taurine. The catalysed reaction is glycodeoxycholate + H2O = deoxycholate + glycine. It catalyses the reaction chenodeoxycholate + glycine = glycochenodeoxycholate + H2O. The enzyme catalyses taurochenodeoxycholate + H2O = chenodeoxycholate + taurine. It carries out the reaction an L-alpha-amino acid + cholate = an N-choloyl-L-alpha-amino acid + H2O. The catalysed reaction is an L-alpha-amino acid + taurocholate = an N-choloyl-L-alpha-amino acid + taurine. It catalyses the reaction glycocholate + an L-alpha-amino acid = an N-choloyl-L-alpha-amino acid + glycine. The enzyme catalyses cholate + L-histidine = L-histidocholate + H2O. It carries out the reaction taurocholate + L-histidine = L-histidocholate + taurine. The catalysed reaction is glycocholate + L-histidine = L-histidocholate + glycine. It catalyses the reaction cholate + L-arginine = L-arginocholate + H2O. The enzyme catalyses taurocholate + L-arginine = L-arginocholate + taurine. It carries out the reaction glycocholate + L-arginine = L-arginocholate + glycine. The catalysed reaction is cholate + L-phenylalanine = L-phenylalanocholate + H2O. It catalyses the reaction taurocholate + L-phenylalanine = L-phenylalanocholate + taurine. Its pathway is lipid metabolism; bile acid biosynthesis. Its function is as follows. Possesses dual functions in bile acid metabolism. Acts as a bile salt hydrolase that catalyzes the deconjugation of glycine- and taurine-linked bile salts, which occurs naturally in the intestines of humans, releasing amino acid residues and deconjugated bile salts (bile acids). Can hydrolyze the amide bond in major human conjugated bile salts, such as glycocholate (GCA), taurocholate (TCA) and taurodeoxycholate (TDCA). Shows a slight preference for taurine-conjugated bile acids as substrates. Also acts as an amine N-acyltransferase that conjugates a wide variety of amino acids to conjugated and non-conjugated bile acids, thus producing bacterial bile acid amidates (BBAAs) - also named microbially conjugated bile acids (MCBAs) - in the gastrointestinal tract. These BBAAs may facilitate communication between the microbiota and host through the activation of human ligand-activated transcription factors. In Clostridium perfringens (strain 13 / Type A), this protein is Bile salt hydrolase/transferase (cbh).